The sequence spans 600 residues: Elongation factor 4 (600 aa).

Residues 5 to 187 (KYIRNFSIIA…AIVNKLPPPK (183 aa)) form the tr-type G domain. GTP contacts are provided by residues 17–22 (DHGKST) and 134–137 (NKID).

It belongs to the TRAFAC class translation factor GTPase superfamily. Classic translation factor GTPase family. LepA subfamily.

It is found in the cell inner membrane. The catalysed reaction is GTP + H2O = GDP + phosphate + H(+). In terms of biological role, required for accurate and efficient protein synthesis under certain stress conditions. May act as a fidelity factor of the translation reaction, by catalyzing a one-codon backward translocation of tRNAs on improperly translocated ribosomes. Back-translocation proceeds from a post-translocation (POST) complex to a pre-translocation (PRE) complex, thus giving elongation factor G a second chance to translocate the tRNAs correctly. Binds to ribosomes in a GTP-dependent manner. The chain is Elongation factor 4 from Rickettsia bellii (strain OSU 85-389).